The chain runs to 141 residues: Hemoglobin subunit alpha (141 aa).

In terms of domain architecture, Globin spans 1–141 (VLSPADKSNV…VSTVLTSKYR (141 aa)). Serine 3 is modified (phosphoserine). N6-succinyllysine is present on residues lysine 7 and lysine 11. Lysine 16 carries the N6-acetyllysine; alternate modification. Lysine 16 carries the N6-succinyllysine; alternate modification. At tyrosine 24 the chain carries Phosphotyrosine. Serine 35 bears the Phosphoserine mark. An N6-succinyllysine modification is found at lysine 40. Phosphoserine is present on serine 49. O2 is bound at residue histidine 58. Histidine 87 lines the heme b pocket. Serine 102 carries the phosphoserine modification. At threonine 108 the chain carries Phosphothreonine. 2 positions are modified to phosphoserine: serine 124 and serine 131. Residues threonine 134 and threonine 137 each carry the phosphothreonine modification. Phosphoserine is present on serine 138.

Belongs to the globin family. In terms of assembly, heterotetramer of two alpha chains and two beta chains. As to expression, red blood cells.

In terms of biological role, involved in oxygen transport from the lung to the various peripheral tissues. Hemopressin acts as an antagonist peptide of the cannabinoid receptor CNR1. Hemopressin-binding efficiently blocks cannabinoid receptor CNR1 and subsequent signaling. The chain is Hemoglobin subunit alpha (HBA) from Saguinus oedipus (Cotton-top tamarin).